Consider the following 323-residue polypeptide: Aspartate carbamoyltransferase catalytic subunit (323 aa).

Residues R71 and T72 each coordinate carbamoyl phosphate. K99 is a binding site for L-aspartate. The carbamoyl phosphate site is built by R121, H151, and Q154. The L-aspartate site is built by R184 and R239. Residues G280 and P281 each contribute to the carbamoyl phosphate site.

It belongs to the aspartate/ornithine carbamoyltransferase superfamily. ATCase family. As to quaternary structure, heterododecamer (2C3:3R2) of six catalytic PyrB chains organized as two trimers (C3), and six regulatory PyrI chains organized as three dimers (R2).

The enzyme catalyses carbamoyl phosphate + L-aspartate = N-carbamoyl-L-aspartate + phosphate + H(+). It participates in pyrimidine metabolism; UMP biosynthesis via de novo pathway; (S)-dihydroorotate from bicarbonate: step 2/3. In terms of biological role, catalyzes the condensation of carbamoyl phosphate and aspartate to form carbamoyl aspartate and inorganic phosphate, the committed step in the de novo pyrimidine nucleotide biosynthesis pathway. This is Aspartate carbamoyltransferase catalytic subunit from Ralstonia pickettii (strain 12J).